Here is a 128-residue protein sequence, read N- to C-terminus: 3-aminoacrylate deaminase RutC (128 aa).

This sequence belongs to the RutC family.

The enzyme catalyses (Z)-3-aminoacrylate + H2O + H(+) = 3-oxopropanoate + NH4(+). Its function is as follows. Involved in pyrimidine catabolism. Catalyzes the deamination of 3-aminoacrylate to malonic semialdehyde, a reaction that can also occur spontaneously. RutC may facilitate the reaction and modulate the metabolic fitness, rather than catalyzing essential functions. This chain is 3-aminoacrylate deaminase RutC, found in Agrobacterium fabrum (strain C58 / ATCC 33970) (Agrobacterium tumefaciens (strain C58)).